A 276-amino-acid polypeptide reads, in one-letter code: Adenylyl-sulfate kinase 1, chloroplastic (276 aa).

Residues 1–38 (MIAAGAKSLLGLSMASPKGIFDSNSMSNSRSVVVVRAC) constitute a chloroplast transit peptide. Positions 46–74 (TLSHNKNGSIPEVKSINGHTGQKQGPLST) are disordered. Over residues 62–74 (NGHTGQKQGPLST) the composition is skewed to polar residues. Residue 108–116 (GLSGSGKST) participates in ATP binding. Substrate-binding positions include aspartate 138, arginine 141, arginine 155, asparagine 158, 181–182 (IS), and glycine 231. Catalysis depends on serine 182, which acts as the Phosphoserine intermediate.

The protein belongs to the APS kinase family. In terms of assembly, homodimer; disulfide-linked. Interacts with APK2. In terms of tissue distribution, expressed in root vasculature, root tips, leaf epidermal and guard cells, pollen grains and funiculus of developing seeds.

Its subcellular location is the plastid. It is found in the chloroplast. It catalyses the reaction adenosine 5'-phosphosulfate + ATP = 3'-phosphoadenylyl sulfate + ADP + H(+). Its pathway is sulfur metabolism; hydrogen sulfide biosynthesis; sulfite from sulfate: step 2/3. Catalyzes the synthesis of activated sulfate. Essential for plant reproduction and viability. Required for the production of glucosinolates. The polypeptide is Adenylyl-sulfate kinase 1, chloroplastic (APK1) (Arabidopsis thaliana (Mouse-ear cress)).